The following is a 104-amino-acid chain: Large ribosomal subunit protein bL21 (104 aa).

This sequence belongs to the bacterial ribosomal protein bL21 family. In terms of assembly, part of the 50S ribosomal subunit. Contacts protein L20.

Functionally, this protein binds to 23S rRNA in the presence of protein L20. The protein is Large ribosomal subunit protein bL21 of Leptospira borgpetersenii serovar Hardjo-bovis (strain JB197).